The chain runs to 523 residues: Maintenance of mitochondrial morphology protein 1 (523 aa).

At 1-43 (MAGSTSASLQTPYFPSSTQINPVRVDHTLPLPPSQPSLSFTQG) the chain is on the lumenal side. Residues 44-64 (LLVGQLSVVLLIGAFIKFFIF) traverse the membrane as a helical segment. Residues 65–523 (GEAPPPPSRG…GSMPDTVTET (459 aa)) are Cytoplasmic-facing. Disordered regions lie at residues 70-118 (PPSR…SSST), 128-147 (YYSATPTHPTPKHGRPRLYH), 295-349 (TSDQ…SKHG), 420-474 (RTGL…DRGL), and 492-523 (GGHQNQSGRDGGRGGNEQFAMPGSMPDTVTET). Polar residues-rich tracts occupy residues 74–96 (GLSNRTSTHPRSYSINAASTDSS) and 105–118 (STSNILRPVPSSST). A compositionally biased stretch (basic residues) spans 137-147 (TPKHGRPRLYH). An SMP-LTD domain is found at 151-412 (QPESLDWFNV…EPRVQVVGLP (262 aa)). The span at 295 to 312 (TSDQTMSPIPTPHDTTSE) shows a compositional bias: polar residues. Residues 449 to 468 (GVSGGGGSGGGSGGGGGGMR) are compositionally biased toward gly residues.

This sequence belongs to the MMM1 family. In terms of assembly, homodimer. Component of the ER-mitochondria encounter structure (ERMES) or MDM complex, composed of MMM1, MDM10, MDM12 and MDM34. An MMM1 homodimer associates with one molecule of MDM12 on each side in a pairwise head-to-tail manner, and the SMP-LTD domains of MMM1 and MDM12 generate a continuous hydrophobic tunnel for phospholipid trafficking.

It is found in the endoplasmic reticulum membrane. Functionally, component of the ERMES/MDM complex, which serves as a molecular tether to connect the endoplasmic reticulum (ER) and mitochondria. Components of this complex are involved in the control of mitochondrial shape and protein biogenesis, and function in nonvesicular lipid trafficking between the ER and mitochondria. The MDM12-MMM1 subcomplex functions in the major beta-barrel assembly pathway that is responsible for biogenesis of all outer membrane beta-barrel proteins, and acts in a late step after the SAM complex. The MDM10-MDM12-MMM1 subcomplex further acts in the TOM40-specific pathway after the action of the MDM12-MMM1 complex. Essential for establishing and maintaining the structure of mitochondria and maintenance of mtDNA nucleoids. This Paracoccidioides lutzii (strain ATCC MYA-826 / Pb01) (Paracoccidioides brasiliensis) protein is Maintenance of mitochondrial morphology protein 1.